Consider the following 1452-residue polypeptide: MALETEAKNSNATATSDATATKASGKAKETNNTAGGKKNLNPIPNSNHQNSNQNLVNGNGTAADGPAAKKKGKKNRNKSPPEPTTEAVLSNGHAEKSTLVDAVEDNADADANANVEKPEDGGAPDAEADGEDIDLDALQDVGITVNISSPGADLLCVQLSSMELVQEIHQLLMDREETCHRTCFSLQLDNATLDNFAELKAISNLEQGSTIKVVEEPYTMREARIHVRHVRDLLKNLDPADAYNGIDCTSLTYLNTITQGDLLDKKKTRPDSVDCTPPEYVTPGVSEPPLLPLHPNVKNAKGPQALKVLTTSAWNPPPGPRKLHGDLMYLYVVTMEEKRFHISACSKGFYINQSTDDTFNPKPDNPSHLSHSLIDLLSHISPSFRRAFQTIQKRRTMRHAFERVATPYQVYQWASPTLEHTVDAIRAEDAFSSKLGYEEHIPGQTRDWNEELQTTRELPRKTLPERLLRERAIFKVHGDFVTAATRGAMAVIDGNVLAINPGEDPKMQMFIWNNIFFSLGFDVRDHYKELGGDAAAFVAPRYDLHGVRVYNAVDVEGLYTLGTVVIDYRGYRVTAQSIIPGILEREQEQSVVYGSIDFGKTVLSHPKYLELLRQAGKHLKILPHAVLNERDEPVELCSSVECKGIIGNDGRHYILDLLRTFPPDVNFLKLQDVQLSKELVDMGFPIEHRHKLCCLRQELLEAFIEDRHVSFIRIAAVHLQQLNAKKQSEKAEGNPVPALEGAEAVSKVNGADKTDVKEEKNEENEKAQSTAGDTKTAEAMVNAIREAQSNVATSNEVQAAEVVKRACAAVGSLKEKEFDFRFNPDVFSPGIRHVDGEEGTCSSLAKQKVLVQEAAEFLVLKQIPAFVKEHMTHSSPPIDGQSLTESLHSHGINVRYLGKVIKILNQMPRMDYLHRIAVLELIVRATKHIYYTYMQNTEPLHLSAAISHFLNCLLTNGPVNPAVSSEEAHKKRGNGGKHNKHKSSKGGKGQQQQQATGNQNGSSSGSSNGSSVSDWTLMTPRSLWQQIRKEAKVYWDWELDCDSIETAVSKYGILRISLLRAFCLKVGIQVLLREYNFESKHKPTFGDDDIVNVFPVVKHISPRATDAYNFYTTGQAKIQQGMFKEGYELISGALNLLNNVFGALHQENGSCLRMLARLSYLLGDAQDALAIQQRAVIMSERVNGMDHPSTILEYTHLSLYSFANGHVGMSLKLLYRARYLMVLICGEDHPEVALIDSNISLILHALGEYELSLRFIEHALKLNLKYFGDKAMPVALSYHLMARTQSCMGDFRSALNNEKETYSFYKSQLGENHEKTKDSAECLRLLTQQAVLLQRKMNDIYSSGKLTSDLPPIHITPPSMGSVLDMLNTINGILFVKISRKDIVKVRSEIEKHFKADSPENEVNDAISSIVAAANNNGEAEDAVPKDVEEQKEAGTQLTNGEKAAATEATSS.

Disordered stretches follow at residues 1–93 (MALE…SNGH) and 266–288 (KKTR…VSEP). Residues 8–24 (KNSNATATSDATATKAS) show a composition bias toward low complexity. Residues 42–59 (PIPNSNHQNSNQNLVNGN) show a composition bias toward polar residues. A compositionally biased stretch (basic residues) spans 68 to 77 (AKKKGKKNRN). At Ser-272 the chain carries Phosphoserine. The 243-residue stretch at 426 to 668 (RAEDAFSSKL…RTFPPDVNFL (243 aa)) folds into the Clu domain. Disordered stretches follow at residues 726-775 (KQSE…GDTK), 962-1013 (AVSS…SSVS), and 1414-1452 (ANNN…ATSS). Over residues 750–766 (GADKTDVKEEKNEENEK) the composition is skewed to basic and acidic residues. Positions 970 to 985 (KKRGNGGKHNKHKSSK) are enriched in basic residues. Residues 990-1013 (QQQQQATGNQNGSSSGSSNGSSVS) show a composition bias toward low complexity. Positions 1423–1433 (AVPKDVEEQKE) are enriched in basic and acidic residues.

The protein belongs to the CLU family.

It localises to the cytoplasm. Functionally, mRNA-binding protein involved in proper cytoplasmic distribution of mitochondria. The protein is Protein clueless of Drosophila erecta (Fruit fly).